Consider the following 61-residue polypeptide: Photosystem II reaction center X protein (61 aa).

The chain crosses the membrane as a helical span at residues 26–46 (IGSFIAAALLIVIPATAFLIF).

This sequence belongs to the PsbX family. Type 2 subfamily. In terms of assembly, PSII consists of a core antenna complex that captures photons, and an electron transfer chain that converts photonic excitation into a charge separation. PSII forms dimeric complexes.

The protein localises to the cellular thylakoid membrane. Involved in the binding and/or turnover of quinones at the Q(B) site of Photosystem II. The chain is Photosystem II reaction center X protein from Prochlorococcus marinus (strain MIT 9301).